Consider the following 514-residue polypeptide: 2,3-bisphosphoglycerate-independent phosphoglycerate mutase (514 aa).

Mn(2+) contacts are provided by Asp14 and Ser64. The active-site Phosphoserine intermediate is Ser64. Substrate-binding positions include His125, 155-156, Arg187, Arg193, 263-266, and Lys336; these read RD and RADR. Mn(2+) is bound by residues Asp403, His407, Asp444, His445, and His463.

Belongs to the BPG-independent phosphoglycerate mutase family. Monomer. Requires Mn(2+) as cofactor.

The catalysed reaction is (2R)-2-phosphoglycerate = (2R)-3-phosphoglycerate. The protein operates within carbohydrate degradation; glycolysis; pyruvate from D-glyceraldehyde 3-phosphate: step 3/5. Its function is as follows. Catalyzes the interconversion of 2-phosphoglycerate and 3-phosphoglycerate. The chain is 2,3-bisphosphoglycerate-independent phosphoglycerate mutase from Shewanella baltica (strain OS185).